We begin with the raw amino-acid sequence, 225 residues long: UPF0758 protein BAV2405 (225 aa).

The 123-residue stretch at 103 to 225 folds into the MPN domain; the sequence is AMKHPEEVRR…ALSMAERGLI (123 aa). Zn(2+) contacts are provided by His174, His176, and Asp187. The JAMM motif signature appears at 174–187; the sequence is HNHPSGNPQPSAAD.

This sequence belongs to the UPF0758 family.

In Bordetella avium (strain 197N), this protein is UPF0758 protein BAV2405.